A 199-amino-acid chain; its full sequence is Ribonuclease HII (199 aa).

The RNase H type-2 domain occupies 12 to 199 (DLLAGTDEAG…FGPVKKILEG (188 aa)). The a divalent metal cation site is built by aspartate 18, glutamate 19, and aspartate 110.

Belongs to the RNase HII family. The cofactor is Mn(2+). Requires Mg(2+) as cofactor.

Its subcellular location is the cytoplasm. It carries out the reaction Endonucleolytic cleavage to 5'-phosphomonoester.. Functionally, endonuclease that specifically degrades the RNA of RNA-DNA hybrids. The protein is Ribonuclease HII of Marinomonas sp. (strain MWYL1).